A 221-amino-acid chain; its full sequence is Cytidylate kinase (221 aa).

11–19 serves as a coordination point for ATP; that stretch reads GPTASGKGT.

Belongs to the cytidylate kinase family. Type 1 subfamily.

Its subcellular location is the cytoplasm. It carries out the reaction CMP + ATP = CDP + ADP. It catalyses the reaction dCMP + ATP = dCDP + ADP. This chain is Cytidylate kinase, found in Cupriavidus pinatubonensis (strain JMP 134 / LMG 1197) (Cupriavidus necator (strain JMP 134)).